The sequence spans 435 residues: 5-methylthioadenosine/S-adenosylhomocysteine deaminase (435 aa).

Zn(2+) is bound by residues histidine 65 and histidine 67. Substrate contacts are provided by glutamate 94, arginine 150, and histidine 189. Zn(2+) is bound at residue histidine 216. Positions 219 and 304 each coordinate substrate. Zn(2+) is bound at residue aspartate 304.

The protein belongs to the metallo-dependent hydrolases superfamily. MTA/SAH deaminase family. Requires Zn(2+) as cofactor.

The enzyme catalyses S-adenosyl-L-homocysteine + H2O + H(+) = S-inosyl-L-homocysteine + NH4(+). It catalyses the reaction S-methyl-5'-thioadenosine + H2O + H(+) = S-methyl-5'-thioinosine + NH4(+). Its function is as follows. Catalyzes the deamination of 5-methylthioadenosine and S-adenosyl-L-homocysteine into 5-methylthioinosine and S-inosyl-L-homocysteine, respectively. Is also able to deaminate adenosine. The sequence is that of 5-methylthioadenosine/S-adenosylhomocysteine deaminase from Bacillus cytotoxicus (strain DSM 22905 / CIP 110041 / 391-98 / NVH 391-98).